Here is a 367-residue protein sequence, read N- to C-terminus: Uroporphyrinogen decarboxylase (367 aa).

Residues arginine 27 to arginine 31, aspartate 77, tyrosine 157, threonine 212, and histidine 333 contribute to the substrate site.

It belongs to the uroporphyrinogen decarboxylase family. As to quaternary structure, homodimer.

The protein localises to the cytoplasm. The catalysed reaction is uroporphyrinogen III + 4 H(+) = coproporphyrinogen III + 4 CO2. It participates in porphyrin-containing compound metabolism; protoporphyrin-IX biosynthesis; coproporphyrinogen-III from 5-aminolevulinate: step 4/4. Its function is as follows. Catalyzes the decarboxylation of four acetate groups of uroporphyrinogen-III to yield coproporphyrinogen-III. This chain is Uroporphyrinogen decarboxylase, found in Cupriavidus metallidurans (strain ATCC 43123 / DSM 2839 / NBRC 102507 / CH34) (Ralstonia metallidurans).